The following is a 352-amino-acid chain: Tubby-like F-box protein 10 (352 aa).

Over residues 1 to 11 the composition is skewed to basic and acidic residues; it reads MAAVREPREEA. The segment at 1-23 is disordered; sequence MAAVREPREEAAVGEGEGEEEGR. In terms of domain architecture, F-box spans 22-78; it reads GRWGGLLPELVEEVVRRVEASGGERWPARKDLVSCACVCRRWREAAAAVVRPLPESG.

This sequence belongs to the TUB family. In terms of tissue distribution, ubiquitous.

The sequence is that of Tubby-like F-box protein 10 (TULP10) from Oryza sativa subsp. japonica (Rice).